The sequence spans 351 residues: Geranylgeranyl pyrophosphate synthase (351 aa).

Isopentenyl diphosphate-binding residues include Lys55, Arg58, and Gln93. Residues Asp100 and Asp104 each coordinate Mg(2+). Arg109 serves as a coordination point for dimethylallyl diphosphate. Arg110 is an isopentenyl diphosphate binding site. Residues Lys196, Thr197, Gln236, Lys253, and Lys262 each contribute to the dimethylallyl diphosphate site.

The protein belongs to the FPP/GGPP synthase family. Interacts with fps1. It depends on Mg(2+) as a cofactor.

The protein resides in the cytoplasm. It is found in the nucleus. It catalyses the reaction isopentenyl diphosphate + dimethylallyl diphosphate = (2E)-geranyl diphosphate + diphosphate. It carries out the reaction isopentenyl diphosphate + (2E)-geranyl diphosphate = (2E,6E)-farnesyl diphosphate + diphosphate. The catalysed reaction is isopentenyl diphosphate + (2E,6E)-farnesyl diphosphate = (2E,6E,10E)-geranylgeranyl diphosphate + diphosphate. It functions in the pathway isoprenoid biosynthesis; farnesyl diphosphate biosynthesis; farnesyl diphosphate from geranyl diphosphate and isopentenyl diphosphate: step 1/1. The protein operates within isoprenoid biosynthesis; geranyl diphosphate biosynthesis; geranyl diphosphate from dimethylallyl diphosphate and isopentenyl diphosphate: step 1/1. Its pathway is isoprenoid biosynthesis; geranylgeranyl diphosphate biosynthesis; geranylgeranyl diphosphate from farnesyl diphosphate and isopentenyl diphosphate: step 1/1. In terms of biological role, catalyzes the trans-addition of the 3 molecules of IPP onto DMAPP to form geranylgeranyl pyrophosphate. Required for the membrane attachment of ypt7 and rhb1. May be involved in vesicle trafficking and protein sorting. Required for forespore membrane formation. The protein is Geranylgeranyl pyrophosphate synthase (spo9) of Schizosaccharomyces pombe (strain 972 / ATCC 24843) (Fission yeast).